A 117-amino-acid polypeptide reads, in one-letter code: UPF0295 protein GTNG_0491 (117 aa).

2 helical membrane-spanning segments follow: residues 12–32 (IRTF…LGLF) and 42–62 (LFMV…FWIG).

It belongs to the UPF0295 family.

The protein localises to the cell membrane. The sequence is that of UPF0295 protein GTNG_0491 from Geobacillus thermodenitrificans (strain NG80-2).